The following is a 380-amino-acid chain: Alpha-N-acetylneuraminate alpha-2,8-sialyltransferase ST8SIA3 (380 aa).

Residues 1–17 lie on the Cytoplasmic side of the membrane; the sequence is MRNCKMARVASVLGLVM. The helical; Signal-anchor for type II membrane protein transmembrane segment at 18-33 threads the bilayer; that stretch reads LSVALLILSLISYVSL. The Lumenal portion of the chain corresponds to 34 to 380; that stretch reads KKENIFTTPK…LTKLTLSHCA (347 aa). 2 N-linked (GlcNAc...) asparagine glycosylation sites follow: Asn-93 and Asn-113. 2 cysteine pairs are disulfide-bonded: Cys-162-Cys-313 and Cys-176-Cys-379. CMP-N-acetyl-beta-neuraminate-binding residues include Asn-167 and Asn-190. Residue Asn-206 is glycosylated (N-linked (GlcNAc...) asparagine). The CMP-N-acetyl-beta-neuraminate site is built by Ser-300, Thr-301, Gly-302, Trp-322, Tyr-336, and His-337. The active-site Proton donor/acceptor is the His-354.

This sequence belongs to the glycosyltransferase 29 family. Homodimer. Expressed in neurons in brain with higher expression in the striatum than in the hippocampus, cortex, and cerebellum (at protein level). Expressed in testes.

It is found in the golgi apparatus membrane. It carries out the reaction a ganglioside GM3 (d18:1(4E)) + CMP-N-acetyl-beta-neuraminate = a ganglioside GD3 (d18:1(4E)) + CMP + H(+). The catalysed reaction is a ganglioside GM3 + CMP-N-acetyl-beta-neuraminate = a ganglioside GD3 + CMP + H(+). It catalyses the reaction an N-acetyl-alpha-neuraminyl-(2-&gt;3)-beta-D-galactosyl derivative + CMP-N-acetyl-beta-neuraminate = an N-acetyl-alpha-neuraminyl-(2-&gt;8)-N-acetyl-alpha-neuraminyl-(2-&gt;3)-beta-D-galactosyl derivative + CMP + H(+). The enzyme catalyses an N-acetyl-alpha-neuraminyl-(2-&gt;3)-beta-D-galactosyl-(1-&gt;4)-N-acetyl-beta-D-glucosaminyl derivative + CMP-N-acetyl-beta-neuraminate = an alpha-Neu5Ac-(2-&gt;8)-alpha-Neu5Ac-(2-&gt;3)-beta-D-Gal-(1-&gt;4)-beta-D-GlcNAc derivative + CMP + H(+). It functions in the pathway protein modification; protein glycosylation. In terms of biological role, catalyzes the transfer of sialic acid from a CMP-linked sialic acid donor onto a terminal alpha-2,3-, alpha-2,6-, or alpha-2,8-linked sialic acid of an acceptor, such as N-linked oligosaccharides of glycoproteins and glycolipids through alpha-2,8-linkages. Forms oligosialic and polysialic acid on various sialylated N-acetyllactosamine oligosaccharides of glycoproteins, including FETUB N-glycans, a2-HS-glycoprotein (AHSG) and alpha 2,3-sialylated glycosphingolipids, such as alpha 2,3-sialylparagloboside and ganglioside GM3 and to a lesser extent NCAM1 N-glycans. However, it is much more specific to N-linked oligosaccharides of glycoproteins than glycosphingolipids. 2,3-sialylparagloboside served as the best acceptor substrate among the glycolipids. alpha-Neu5Ac-(2-&gt;8)-alpha-Neu5Ac-(2-&gt;3)-beta-D-Gal-(1-&gt;4)-6S-D-GlcNAc and monosialyl and disialyl N-acetyllactosamines are the best acceptor substrates among glycoproteins. May play critical role in the striatum by mediating the formation of disialylated and trisialylated terminal glycotopes on N- and O-glycans of specific striatal proteins, regulating their distribution in lipid rafts, affecting their interaction with other binding partners, and subsequently modulating striatal functions. In Mus musculus (Mouse), this protein is Alpha-N-acetylneuraminate alpha-2,8-sialyltransferase ST8SIA3.